Consider the following 484-residue polypeptide: Glutamyl-tRNA(Gln) amidotransferase subunit A (484 aa).

Active-site charge relay system residues include Lys-76 and Ser-151. Ser-175 (acyl-ester intermediate) is an active-site residue.

The protein belongs to the amidase family. GatA subfamily. Heterotrimer of A, B and C subunits.

The enzyme catalyses L-glutamyl-tRNA(Gln) + L-glutamine + ATP + H2O = L-glutaminyl-tRNA(Gln) + L-glutamate + ADP + phosphate + H(+). Allows the formation of correctly charged Gln-tRNA(Gln) through the transamidation of misacylated Glu-tRNA(Gln) in organisms which lack glutaminyl-tRNA synthetase. The reaction takes place in the presence of glutamine and ATP through an activated gamma-phospho-Glu-tRNA(Gln). The protein is Glutamyl-tRNA(Gln) amidotransferase subunit A of Hahella chejuensis (strain KCTC 2396).